A 651-amino-acid polypeptide reads, in one-letter code: Acetyl-coenzyme A synthetase (651 aa).

Residues 193 to 196 (RRGK) and Thr312 each bind CoA. ATP is bound by residues 388–390 (GEP), 412–417 (DTWWQT), Asp501, and Arg516. Residue Ser524 participates in CoA binding. Mg(2+) is bound by residues Val538, His540, and Val543. Lys610 carries the post-translational modification N6-acetyllysine.

This sequence belongs to the ATP-dependent AMP-binding enzyme family. Requires Mg(2+) as cofactor. Post-translationally, acetylated. Deacetylation by the SIR2-homolog deacetylase activates the enzyme.

It carries out the reaction acetate + ATP + CoA = acetyl-CoA + AMP + diphosphate. Its function is as follows. Catalyzes the conversion of acetate into acetyl-CoA (AcCoA), an essential intermediate at the junction of anabolic and catabolic pathways. AcsA undergoes a two-step reaction. In the first half reaction, AcsA combines acetate with ATP to form acetyl-adenylate (AcAMP) intermediate. In the second half reaction, it can then transfer the acetyl group from AcAMP to the sulfhydryl group of CoA, forming the product AcCoA. The chain is Acetyl-coenzyme A synthetase from Streptomyces coelicolor (strain ATCC BAA-471 / A3(2) / M145).